Consider the following 860-residue polypeptide: Protein argonaute-3 (860 aa).

The PAZ domain maps to 230–349 (PVIQFMCEVL…LPLEVCNIVA (120 aa)). The Piwi domain maps to 518 to 819 (LIIVILPGKT…VAFRARYHLV (302 aa)). The interaction with guide RNA stretch occupies residues 530-567 (YAEVKRAGDTLLGMATQCVQVKNVIKTSPQTLSNLCLK). A divalent metal cation-binding residues include D598, E638, and D670. The interaction with guide RNA stretch occupies residues 758–805 (QGTSRPSHYHVLWDDNCFTADELQLLTYQLCHTYVRCTRSVSIPAPAY). H808 serves as a coordination point for a divalent metal cation.

Belongs to the argonaute family. Ago subfamily.

The protein resides in the cytoplasm. It localises to the P-body. It catalyses the reaction Endonucleolytic cleavage to 5'-phosphomonoester.. Functionally, required for RNA-mediated gene silencing (RNAi). Binds to short RNAs such as microRNAs (miRNAs) and represses the translation of mRNAs which are complementary to them. Possesses RNA slicer activity but only on select RNAs bearing 5'- and 3'-flanking sequences to the region of guide-target complementarity. In Gallus gallus (Chicken), this protein is Protein argonaute-3 (AGO3).